Here is a 769-residue protein sequence, read N- to C-terminus: Phosphoribosylformylglycinamidine synthase subunit PurL (769 aa).

The span at M1–D13 shows a compositional bias: polar residues. The interval M1–R30 is disordered. The active site involves H65. 2 residues coordinate ATP: Y68 and K109. Residue E111 coordinates Mg(2+). Residues S112–H115 and R134 each bind substrate. The active-site Proton acceptor is H113. Mg(2+) is bound at residue D135. Q260 serves as a coordination point for substrate. D288 contributes to the Mg(2+) binding site. E337–Q339 is a substrate binding site. N524 and G561 together coordinate ATP. Mg(2+) is bound at residue N562. Position 564 (S564) interacts with substrate.

The protein belongs to the FGAMS family. Monomer. Part of the FGAM synthase complex composed of 1 PurL, 1 PurQ and 2 PurS subunits.

Its subcellular location is the cytoplasm. It carries out the reaction N(2)-formyl-N(1)-(5-phospho-beta-D-ribosyl)glycinamide + L-glutamine + ATP + H2O = 2-formamido-N(1)-(5-O-phospho-beta-D-ribosyl)acetamidine + L-glutamate + ADP + phosphate + H(+). It functions in the pathway purine metabolism; IMP biosynthesis via de novo pathway; 5-amino-1-(5-phospho-D-ribosyl)imidazole from N(2)-formyl-N(1)-(5-phospho-D-ribosyl)glycinamide: step 1/2. Part of the phosphoribosylformylglycinamidine synthase complex involved in the purines biosynthetic pathway. Catalyzes the ATP-dependent conversion of formylglycinamide ribonucleotide (FGAR) and glutamine to yield formylglycinamidine ribonucleotide (FGAM) and glutamate. The FGAM synthase complex is composed of three subunits. PurQ produces an ammonia molecule by converting glutamine to glutamate. PurL transfers the ammonia molecule to FGAR to form FGAM in an ATP-dependent manner. PurS interacts with PurQ and PurL and is thought to assist in the transfer of the ammonia molecule from PurQ to PurL. In Parafrankia sp. (strain EAN1pec), this protein is Phosphoribosylformylglycinamidine synthase subunit PurL.